The following is a 194-amino-acid chain: Orotate phosphoribosyltransferase (194 aa).

5-phospho-alpha-D-ribose 1-diphosphate-binding positions include lysine 98 and 122–130; that span reads EDVLTTGGS. 2 residues coordinate orotate: threonine 126 and arginine 154.

Belongs to the purine/pyrimidine phosphoribosyltransferase family. PyrE subfamily. In terms of assembly, homodimer. Mg(2+) serves as cofactor.

It carries out the reaction orotidine 5'-phosphate + diphosphate = orotate + 5-phospho-alpha-D-ribose 1-diphosphate. Its pathway is pyrimidine metabolism; UMP biosynthesis via de novo pathway; UMP from orotate: step 1/2. Catalyzes the transfer of a ribosyl phosphate group from 5-phosphoribose 1-diphosphate to orotate, leading to the formation of orotidine monophosphate (OMP). This Deinococcus radiodurans (strain ATCC 13939 / DSM 20539 / JCM 16871 / CCUG 27074 / LMG 4051 / NBRC 15346 / NCIMB 9279 / VKM B-1422 / R1) protein is Orotate phosphoribosyltransferase.